A 299-amino-acid polypeptide reads, in one-letter code: ATP phosphoribosyltransferase (299 aa).

This sequence belongs to the ATP phosphoribosyltransferase family. Long subfamily. As to quaternary structure, equilibrium between an active dimeric form, an inactive hexameric form and higher aggregates. Interconversion between the various forms is largely reversible and is influenced by the natural substrates and inhibitors of the enzyme. Requires Mg(2+) as cofactor.

The protein resides in the cytoplasm. It catalyses the reaction 1-(5-phospho-beta-D-ribosyl)-ATP + diphosphate = 5-phospho-alpha-D-ribose 1-diphosphate + ATP. The protein operates within amino-acid biosynthesis; L-histidine biosynthesis; L-histidine from 5-phospho-alpha-D-ribose 1-diphosphate: step 1/9. Feedback inhibited by histidine. In terms of biological role, catalyzes the condensation of ATP and 5-phosphoribose 1-diphosphate to form N'-(5'-phosphoribosyl)-ATP (PR-ATP). Has a crucial role in the pathway because the rate of histidine biosynthesis seems to be controlled primarily by regulation of HisG enzymatic activity. The protein is ATP phosphoribosyltransferase of Blochmanniella pennsylvanica (strain BPEN).